Consider the following 668-residue polypeptide: Biosynthetic arginine decarboxylase (668 aa).

At Lys105 the chain carries N6-(pyridoxal phosphate)lysine. 286–296 (LDVGGGLGVDY) lines the substrate pocket.

It belongs to the Orn/Lys/Arg decarboxylase class-II family. SpeA subfamily. It depends on Mg(2+) as a cofactor. Pyridoxal 5'-phosphate is required as a cofactor.

It carries out the reaction L-arginine + H(+) = agmatine + CO2. In terms of biological role, catalyzes the biosynthesis of agmatine from arginine. In Rhodopirellula baltica (strain DSM 10527 / NCIMB 13988 / SH1), this protein is Biosynthetic arginine decarboxylase.